The sequence spans 431 residues: MAEIKDIHALEVLDSRGNPTVQADVVLASGVRGTACAPSGASTGSREALELRDGDTSRYLGKGVLKAVEAVNGRIRDALVGKDALDQRALDAAMLELDGTDNKAGLGANAILAVSLAAAKAAAIEKGVPLYAHIADLYGQSGQFRMPVPMMNILNGGEHADNNVDIQEFMIQPVGAPSFREALRMGAEIFHALKKVLAARGLSTSVGDEGGFAPNLASNAEALAVIQQAVEKAGYVLGKDVTLALDCASSEFYQDGQYNLSGEGKSYDAAGFVDYLAALCDQYPIVSIEDGMDESDWAGWKALTEKLGDKVQLVGDDLFVTNTRILKRGIDEHIGNSILIKFNQIGSLSETLDAIKMAQDAGFTAVISHRSGETEDTTIADLAVGTSAGQIKTGSLCRSDRVAKYNRLLVIEQELEGQAVYPGLAAIKGQG.

Residue Q167 coordinates (2R)-2-phosphoglycerate. The Proton donor role is filled by E209. Mg(2+) is bound by residues D246, E289, and D316. Residues K341, R370, S371, and K392 each contribute to the (2R)-2-phosphoglycerate site. The Proton acceptor role is filled by K341.

The protein belongs to the enolase family. Component of the RNA degradosome, a multiprotein complex involved in RNA processing and mRNA degradation. Requires Mg(2+) as cofactor.

It is found in the cytoplasm. Its subcellular location is the secreted. The protein resides in the cell surface. The enzyme catalyses (2R)-2-phosphoglycerate = phosphoenolpyruvate + H2O. It participates in carbohydrate degradation; glycolysis; pyruvate from D-glyceraldehyde 3-phosphate: step 4/5. In terms of biological role, catalyzes the reversible conversion of 2-phosphoglycerate (2-PG) into phosphoenolpyruvate (PEP). It is essential for the degradation of carbohydrates via glycolysis. This is Enolase from Chromohalobacter salexigens (strain ATCC BAA-138 / DSM 3043 / CIP 106854 / NCIMB 13768 / 1H11).